The following is a 222-amino-acid chain: Large ribosomal subunit protein uL4 (222 aa).

A disordered region spans residues 50-72 (TRGRSEVSHSTRKPFRQKGTGNA).

This sequence belongs to the universal ribosomal protein uL4 family. As to quaternary structure, part of the 50S ribosomal subunit.

In terms of biological role, one of the primary rRNA binding proteins, this protein initially binds near the 5'-end of the 23S rRNA. It is important during the early stages of 50S assembly. It makes multiple contacts with different domains of the 23S rRNA in the assembled 50S subunit and ribosome. Functionally, forms part of the polypeptide exit tunnel. The protein is Large ribosomal subunit protein uL4 of Chlamydia muridarum (strain MoPn / Nigg).